The primary structure comprises 215 residues: Recombination protein RecR (215 aa).

The C4-type zinc-finger motif lies at 74-89 (CQRCGHLSADPICDIC). Residues 97–191 (GVICVVADSR…RVTRIAYGLP (95 aa)) form the Toprim domain.

Belongs to the RecR family.

Functionally, may play a role in DNA repair. It seems to be involved in an RecBC-independent recombinational process of DNA repair. It may act with RecF and RecO. This Synechococcus sp. (strain RCC307) protein is Recombination protein RecR.